A 799-amino-acid polypeptide reads, in one-letter code: Leucine--tRNA ligase (799 aa).

The 'HIGH' region signature appears at proline 39–histidine 50. A 'KMSKS' region motif is present at residues lysine 575–serine 579. Residue lysine 578 participates in ATP binding.

The protein belongs to the class-I aminoacyl-tRNA synthetase family.

It is found in the cytoplasm. The enzyme catalyses tRNA(Leu) + L-leucine + ATP = L-leucyl-tRNA(Leu) + AMP + diphosphate. This is Leucine--tRNA ligase from Malacoplasma penetrans (strain HF-2) (Mycoplasma penetrans).